The chain runs to 1779 residues: 5-methyl-1-naphthoate synthase (1779 aa).

The region spanning 10-433 is the Ketosynthase family 3 (KS3) domain; sequence VEPLAVIGMS…GSIAHAVLQQ (424 aa). Residues C181, H316, and H356 each act as for beta-ketoacyl synthase activity in the active site. Residues 902–1027 form an N-terminal hotdog fold region; that stretch reads HTLIGARTTV…ATVVHEPEVG (126 aa). The PKS/mFAS DH domain maps to 902–1180; that stretch reads HTLIGARTTV…YVKVQDIGSG (279 aa). Residues 1042–1180 are C-terminal hotdog fold; the sequence is PVSWTWAKVD…YVKVQDIGSG (139 aa). The 79-residue stretch at 1664–1742 folds into the Carrier domain; that stretch reads GELPELVLKV…ALAEFLAAEV (79 aa). S1702 bears the O-(pantetheine 4'-phosphoryl)serine mark. Residues 1746-1771 are disordered; sequence TADAEETDPVAGLPAPQQGSGTAEQL.

The catalysed reaction is 5 malonyl-CoA + acetyl-CoA + 3 NADPH + 7 H(+) = 5-methyl-1-naphthoate + 5 CO2 + 3 NADP(+) + 6 CoA + 4 H2O. It participates in antibiotic biosynthesis. Its function is as follows. Polyketide synthase that catalyzes the biosynthesis of the bicyclic aromatic compound 5-methyl-1-naphthoate in the biosynthesis of the antitumor antibiotic azinomycin B. The protein is 5-methyl-1-naphthoate synthase of Streptomyces sahachiroi.